The primary structure comprises 412 residues: Elongation factor 1-gamma 2 (412 aa).

The residue at position 2 (S2) is an N-acetylserine. The 76-residue stretch at 2–77 (SQGTLYINRS…YLANQVADEK (76 aa)) folds into the GST N-terminal domain. The 132-residue stretch at 86-217 (DVIEKSQILR…AEKALTYTPP (132 aa)) folds into the GST C-terminal domain. The disordered stretch occupies residues 216-253 (PPKKQKAEKPKAEKSKAEKKKDEAKPADDAAPAKKPKH). Over residues 220–247 (QKAEKPKAEKSKAEKKKDEAKPADDAAP) the composition is skewed to basic and acidic residues. Positions 251 to 412 (PKHPLEALGK…KEIVDGKVLK (162 aa)) constitute an EF-1-gamma C-terminal domain.

The eukaryotic elongation factor 1 complex (eEF1) is probably a heterohexamer. Two trimeric complexes, each composed of eEF1A (TEF1 or TEF2), eEF1Balpha (EFB1) and eEF1Bgamma (CAM1 or TEF4), are probably dimerized via the eF1Bgamma subunits. The eEF1B subcomplex with the GEF activity is formed of eEF1Balpha and eEF1Bgamma. TEF4 interacts with EFB1.

It is found in the cytoplasm. It participates in protein biosynthesis; polypeptide chain elongation. In terms of biological role, subunit of the eukaryotic elongation factor 1 complex (eEF1). Probably plays a role in anchoring the complex to other cellular components. The polypeptide is Elongation factor 1-gamma 2 (TEF4) (Saccharomyces cerevisiae (strain ATCC 204508 / S288c) (Baker's yeast)).